The chain runs to 454 residues: GTPase Obg (454 aa).

The 158-residue stretch at 2-159 (SDFVDEAVLH…VDIRLELKTI (158 aa)) folds into the Obg domain. Residues 60–87 (YQRRPHRKAENGAPGQGSNRSGASGADL) form a disordered region. In terms of domain architecture, OBG-type G spans 160–335 (ADVGLVGFPS…LAYALGEQVA (176 aa)). Residues 166 to 173 (GFPSAGKS), 191 to 195 (FTTLV), 212 to 215 (DVPG), 287 to 290 (NKID), and 316 to 318 (SAA) contribute to the GTP site. Mg(2+) is bound by residues S173 and T193. The OCT domain occupies 353 to 435 (PREIGEIPFQ…DNPVVFDWDP (83 aa)).

Belongs to the TRAFAC class OBG-HflX-like GTPase superfamily. OBG GTPase family. As to quaternary structure, monomer. Mg(2+) is required as a cofactor.

The protein resides in the cytoplasm. Its function is as follows. An essential GTPase which binds GTP, GDP and possibly (p)ppGpp with moderate affinity, with high nucleotide exchange rates and a fairly low GTP hydrolysis rate. Plays a role in control of the cell cycle, stress response, ribosome biogenesis and in those bacteria that undergo differentiation, in morphogenesis control. The protein is GTPase Obg of Thermobifida fusca (strain YX).